The chain runs to 263 residues: Ribonuclease HII (263 aa).

The 192-residue stretch at 71 to 262 folds into the RNase H type-2 domain; it reads QAIAGIDEVG…VKSMCCDSTN (192 aa). A divalent metal cation-binding residues include Asp77, Glu78, and Asp172.

This sequence belongs to the RNase HII family. Requires Mn(2+) as cofactor. Mg(2+) is required as a cofactor.

It localises to the cytoplasm. The catalysed reaction is Endonucleolytic cleavage to 5'-phosphomonoester.. Functionally, endonuclease that specifically degrades the RNA of RNA-DNA hybrids. The chain is Ribonuclease HII from Streptococcus pyogenes serotype M3 (strain ATCC BAA-595 / MGAS315).